The sequence spans 317 residues: Melanocyte-stimulating hormone receptor (317 aa).

Topologically, residues 1–37 (MAVQGFQRRLLGSLNSTPTAIPQLGLAANQTGARCLE) are extracellular. An N-linked (GlcNAc...) asparagine glycan is attached at asparagine 29. Residues 38–63 (VSIPDGLFLSLGLVSLVENVLVVATI) form a helical membrane-spanning segment. Topologically, residues 64–72 (AKNRNLHSP) are cytoplasmic. Residues 73–93 (TYCFICCLALSDLLVSGGNVL) form a helical membrane-spanning segment. At 94-118 (ETVVILLLEASALAARAAVVQPLDN) the chain is on the extracellular side. Residues 119–140 (VIDVITCSSMVSSLCFLGAIAM) traverse the membrane as a helical segment. The Cytoplasmic portion of the chain corresponds to 141-163 (DRYVSIFYALRYHSIVTLPRARQ). Residues 164–183 (AIAAIWVASVLFSTLFIAYY) form a helical membrane-spanning segment. Over 184–191 (DHAAVLLC) the chain is Extracellular. A helical transmembrane segment spans residues 192 to 211 (LVVFFLAMLVLMAVLYVHML). Residues 212–240 (ARACQHAQGIARLHKRQRPLHQGFGLKGA) are Cytoplasmic-facing. The chain crosses the membrane as a helical span at residues 241–266 (VTLTILLGIFFLCWGPFFLHLTLIVL). Residues 267–279 (CPQHPTCSCIFKN) lie on the Extracellular side of the membrane. A helical membrane pass occupies residues 280–300 (FNLFLTLIICNAIIDPLIYAF). The Cytoplasmic segment spans residues 301–317 (RRQELRRTLKEGLTCSW). Cysteine 315 is lipidated: S-palmitoyl cysteine.

Belongs to the G-protein coupled receptor 1 family. As to quaternary structure, interacts with MGRN1, but does not undergo MGRN1-mediated ubiquitination; this interaction competes with GNAS-binding and thus inhibits agonist-induced cAMP production. Interacts with OPN3; the interaction results in a decrease in MC1R-mediated cAMP signaling and ultimately a decrease in melanin production in melanocytes.

It localises to the cell membrane. Receptor for MSH (alpha, beta and gamma) and ACTH. The activity of this receptor is mediated by G proteins which activate adenylate cyclase. Mediates melanogenesis, the production of eumelanin (black/brown) and phaeomelanin (red/yellow), via regulation of cAMP signaling in melanocytes. This Hylobates lar (Lar gibbon) protein is Melanocyte-stimulating hormone receptor (MC1R).